Here is a 135-residue protein sequence, read N- to C-terminus: ATP synthase epsilon chain (135 aa).

It belongs to the ATPase epsilon chain family. F-type ATPases have 2 components, CF(1) - the catalytic core - and CF(0) - the membrane proton channel. CF(1) has five subunits: alpha(3), beta(3), gamma(1), delta(1), epsilon(1). CF(0) has three main subunits: a, b and c.

It localises to the cell inner membrane. Functionally, produces ATP from ADP in the presence of a proton gradient across the membrane. The polypeptide is ATP synthase epsilon chain (Allorhizobium ampelinum (strain ATCC BAA-846 / DSM 112012 / S4) (Agrobacterium vitis (strain S4))).